The sequence spans 645 residues: Developmental regulatory protein wetA (645 aa).

Disordered stretches follow at residues 158–187 (SLHS…RKPK), 201–249 (TNLR…VSPP), 284–376 (YYGQ…QMHW), 461–578 (AQTF…DGAS), and 596–618 (GVAP…DRRR). Residues 240 to 249 (TQGNLPVSPP) show a composition bias toward polar residues. Basic residues-rich tracts occupy residues 315-326 (QHHHHPHHHHQQ) and 351-361 (QHQHQHHHQQQ). Positions 362–373 (QHHQQQQQQQHQ) are enriched in low complexity. The segment covering 509 to 518 (GPSSSPTPAD) has biased composition (polar residues). A compositionally biased stretch (low complexity) spans 528–546 (SSGASVSSLRSSSGRLPAS). Residues 562–572 (ISGSNSATSLG) show a composition bias toward polar residues.

Belongs to the wetA family.

BrlA, abaA and wetA are pivotal regulators of conidiophore development and conidium maturation. They act individually and together to regulate their own expression and that of numerous other sporulation-specific genes. BrlA, abaA and wetA act together to positively regulate the expression of the Pks1 gene cluster that mediates the biosynthesis of an anthraquinone derivative pigment that contributes to conidial pigmentation that provides protection from UV radiation, heat and cold stress. The protein is Developmental regulatory protein wetA of Metarhizium robertsii (strain ARSEF 23 / ATCC MYA-3075) (Metarhizium anisopliae (strain ARSEF 23)).